The sequence spans 262 residues: Oxidoreductase GME11367 (262 aa).

It belongs to the avfA family.

The protein operates within secondary metabolite biosynthesis. In terms of biological role, oxidoreductase; part of the gene cluster that mediates the biosynthesis of dibenzodioxocinones such as pestalotiollide B, a novel class of inhibitors against cholesterol ester transfer protein (CEPT). The biosynthesis initiates from condensation of acetate and malonate units catalyzed by the non-reducing PKS pks8/GME11356. Pks8/GME11356 lacks a thioesterase (TE) domain, which is important to the cyclizing of the third ring of atrochrysone carboxylic acid, and the esterase GME11355 might play the role of TE and catalyzes the cyclization reaction of the C ring. The lactamase-like protein GME11357 (or other beta-lactamases in Pestalotiopsis microspora) probably hydrolyzes the thioester bond between the ACP of pks8/GME11356 and the intermediate to release atrochrysone carboxylic acid, which is spontaneously dehydrates to form endocrocin anthrone. Endocrocin anthrone is further converted to emodin via the endocrocin intermediate. Emodin is then oxidized by several enzymes such as the Baeyer-Villiger oxidase GME11358, the oxidoreductase GME11367, the short chain dehydrogenase/reductase GME11373, as well as by other oxidoreductases from the cluster, to modify the A and C rings and open the B ring, and finally yield monodictyphenone. The prenyltransferase GME11375 may catalyze the addition reaction between the C5 side chains and the carbon bone of dibenzodioxocinones. The remaining biochemical reactions to the final product dibenzodioxocinones should be methylation catalyzed by methyltransferase GME11366 and reduction and lactonization reaction catalyzed by a series of oxidordeuctases. This is Oxidoreductase GME11367 from Pestalotiopsis microspora.